The sequence spans 408 residues: Hepatocyte nuclear factor 4-gamma (408 aa).

The segment at residues 9-84 (NCLCAICGDR…AGMKKEAVQN (76 aa)) is a DNA-binding region (nuclear receptor). NR C4-type zinc fingers lie at residues 12-32 (CAIC…CDGC) and 48-72 (CRFS…LRKC). Serine 94 is subject to Phosphoserine. An NR LBD domain is found at 99–328 (SNIPSINTLA…NLLQEMLLGG (230 aa)). The segment at 369–408 (ATPETPLPSPPQGSGQEPYKITANQASVISHQSLSKQKQL) is disordered. Phosphothreonine is present on residues threonine 370 and threonine 373. Serine 377 is subject to Phosphoserine. The span at 390-408 (TANQASVISHQSLSKQKQL) shows a compositional bias: polar residues.

The protein belongs to the nuclear hormone receptor family. NR2 subfamily.

It is found in the nucleus. Transcription factor. Has a lower transcription activation potential than HNF4-alpha. The polypeptide is Hepatocyte nuclear factor 4-gamma (Hnf4g) (Mus musculus (Mouse)).